The chain runs to 128 residues: Photosystem II reaction center Psb28 protein (128 aa).

Residues 109–128 are disordered; that stretch reads SGLGYSQDSGEAPASDSSNG. A compositionally biased stretch (polar residues) spans 111 to 128; it reads LGYSQDSGEAPASDSSNG.

It belongs to the Psb28 family. As to quaternary structure, part of the photosystem II complex.

Its subcellular location is the cellular thylakoid membrane. In Synechococcus sp. (strain CC9311), this protein is Photosystem II reaction center Psb28 protein.